The following is a 693-amino-acid chain: DNA ligase (693 aa).

Residues 40–44 (DSEYD), 89–90 (SL), and glutamate 121 contribute to the NAD(+) site. The active-site N6-AMP-lysine intermediate is lysine 123. Arginine 144, glutamate 179, lysine 295, and lysine 319 together coordinate NAD(+). Cysteine 413, cysteine 416, cysteine 431, and cysteine 437 together coordinate Zn(2+). The region spanning 610–693 (REQNILTGKI…AFIKCLEKEV (84 aa)) is the BRCT domain.

It belongs to the NAD-dependent DNA ligase family. LigA subfamily. The cofactor is Mg(2+). It depends on Mn(2+) as a cofactor.

The enzyme catalyses NAD(+) + (deoxyribonucleotide)n-3'-hydroxyl + 5'-phospho-(deoxyribonucleotide)m = (deoxyribonucleotide)n+m + AMP + beta-nicotinamide D-nucleotide.. Functionally, DNA ligase that catalyzes the formation of phosphodiester linkages between 5'-phosphoryl and 3'-hydroxyl groups in double-stranded DNA using NAD as a coenzyme and as the energy source for the reaction. It is essential for DNA replication and repair of damaged DNA. The chain is DNA ligase from Rickettsia typhi (strain ATCC VR-144 / Wilmington).